We begin with the raw amino-acid sequence, 274 residues long: NH(3)-dependent NAD(+) synthetase (274 aa).

46–53 contacts ATP; it reads GISGGQDS. A Mg(2+)-binding site is contributed by aspartate 52. Arginine 140 contacts deamido-NAD(+). Threonine 160 serves as a coordination point for ATP. A Mg(2+)-binding site is contributed by glutamate 165. 2 residues coordinate deamido-NAD(+): lysine 173 and aspartate 180. ATP-binding residues include lysine 189 and threonine 211. Position 260–261 (260–261) interacts with deamido-NAD(+); the sequence is HK.

It belongs to the NAD synthetase family. In terms of assembly, homodimer.

The enzyme catalyses deamido-NAD(+) + NH4(+) + ATP = AMP + diphosphate + NAD(+) + H(+). The protein operates within cofactor biosynthesis; NAD(+) biosynthesis; NAD(+) from deamido-NAD(+) (ammonia route): step 1/1. Its function is as follows. Catalyzes the ATP-dependent amidation of deamido-NAD to form NAD. Uses ammonia as a nitrogen source. The chain is NH(3)-dependent NAD(+) synthetase from Streptococcus pneumoniae (strain Hungary19A-6).